We begin with the raw amino-acid sequence, 872 residues long: Leucine--tRNA ligase (872 aa).

A 'HIGH' region motif is present at residues 42-52; it reads PYPSGSLHMGH. Positions 634-638 match the 'KMSKS' region motif; it reads TMSKS. K637 contacts ATP.

The protein belongs to the class-I aminoacyl-tRNA synthetase family.

The protein resides in the cytoplasm. The catalysed reaction is tRNA(Leu) + L-leucine + ATP = L-leucyl-tRNA(Leu) + AMP + diphosphate. The protein is Leucine--tRNA ligase of Nostoc sp. (strain PCC 7120 / SAG 25.82 / UTEX 2576).